The following is a 1465-amino-acid chain: DNA polymerase alpha catalytic subunit (1465 aa).

2 disordered regions span residues 20 to 39 (GSFA…GRQE) and 105 to 135 (LEDD…PSVT). Residues 26–35 (RARREKKSKK) show a composition bias toward basic residues. Residue Thr-180 is modified to Phosphothreonine. Phosphoserine is present on residues Ser-192 and Ser-215. Lys-230 is subject to N6-acetyllysine. Residues 261 to 297 (DESMDTEKVDEKPVTAKTWDQETEPVERVEHEADPER) form a disordered region. Composition is skewed to basic and acidic residues over residues 265 to 274 (DTEKVDEKPV) and 285 to 297 (PVER…DPER). A DNA-binding region spans residues 654–719 (RINECKVPYW…YHLSELVQQI (66 aa)). Lys-974 is subject to N6-succinyllysine. The tract at residues 1249–1380 (QFRVHQYHKD…NGPLCPVCMK (132 aa)) is DNA-binding. The Zn(2+) site is built by Cys-1287, Cys-1290, Cys-1314, Cys-1319, Cys-1352, Cys-1357, Cys-1375, and Cys-1378. The CysA-type zinc finger occupies 1287–1317 (CPSCGTENIYDNVFEGSGLDMEPSLYRCSNV). Residues 1352 to 1378 (CEEPTCCSRLRRLPLHFSRNGPLCPVC) carry the CysB motif motif.

It belongs to the DNA polymerase type-B family. Component of the alpha DNA polymerase complex (also known as the alpha DNA polymerase-primase complex) consisting of four subunits: the catalytic subunit POLA1, the regulatory subunit POLA2, and the primase complex subunits PRIM1 and PRIM2 respectively. Within the complex, POLA1 directly interacts with PRIM2. Interacts with PARP1; this interaction functions as part of the control of replication fork progression. Interacts with MCM10 and WDHD1; these interactions recruit the polymerase alpha complex to the pre-replicative complex bound to DNA. Interacts with RPA1; this interaction stabilizes the replicative complex and reduces the misincorporation rate of DNA polymerase alpha by acting as a fidelity clamp. Expressed in those zones containing proliferating cells in the developing embryonic neocortex, as well as in the lateral and medial ganglionic eminences. After birth, expressed in cells that remain proliferating in the ventricular and subventricular zone of the striatum.

It is found in the nucleus. The protein resides in the cytoplasm. Its subcellular location is the cytosol. The enzyme catalyses DNA(n) + a 2'-deoxyribonucleoside 5'-triphosphate = DNA(n+1) + diphosphate. Functionally, catalytic subunit of the DNA polymerase alpha complex (also known as the alpha DNA polymerase-primase complex) which plays an essential role in the initiation of DNA synthesis. During the S phase of the cell cycle, the DNA polymerase alpha complex (composed of a catalytic subunit POLA1, a regulatory subunit POLA2 and two primase subunits PRIM1 and PRIM2) is recruited to DNA at the replicative forks via direct interactions with MCM10 and WDHD1. The primase subunit of the polymerase alpha complex initiates DNA synthesis by oligomerising short RNA primers on both leading and lagging strands. These primers are initially extended by the polymerase alpha catalytic subunit and subsequently transferred to polymerase delta and polymerase epsilon for processive synthesis on the lagging and leading strand, respectively. The reason this transfer occurs is because the polymerase alpha has limited processivity and lacks intrinsic 3' exonuclease activity for proofreading error, and therefore is not well suited for replicating long complexes. In the cytosol, responsible for a substantial proportion of the physiological concentration of cytosolic RNA:DNA hybrids, which are necessary to prevent spontaneous activation of type I interferon responses. In Mus musculus (Mouse), this protein is DNA polymerase alpha catalytic subunit (Pola1).